The chain runs to 117 residues: Large ribosomal subunit protein bL20 (117 aa).

It belongs to the bacterial ribosomal protein bL20 family.

In terms of biological role, binds directly to 23S ribosomal RNA and is necessary for the in vitro assembly process of the 50S ribosomal subunit. It is not involved in the protein synthesizing functions of that subunit. This is Large ribosomal subunit protein bL20 from Leptospira biflexa serovar Patoc (strain Patoc 1 / Ames).